The primary structure comprises 468 residues: 3-isopropylmalate dehydratase large subunit (468 aa).

[4Fe-4S] cluster contacts are provided by Cys347, Cys407, and Cys410.

It belongs to the aconitase/IPM isomerase family. LeuC type 1 subfamily. As to quaternary structure, heterodimer of LeuC and LeuD. [4Fe-4S] cluster serves as cofactor.

The enzyme catalyses (2R,3S)-3-isopropylmalate = (2S)-2-isopropylmalate. The protein operates within amino-acid biosynthesis; L-leucine biosynthesis; L-leucine from 3-methyl-2-oxobutanoate: step 2/4. Functionally, catalyzes the isomerization between 2-isopropylmalate and 3-isopropylmalate, via the formation of 2-isopropylmaleate. The sequence is that of 3-isopropylmalate dehydratase large subunit from Synechocystis sp. (strain ATCC 27184 / PCC 6803 / Kazusa).